Consider the following 742-residue polypeptide: 5-methyltetrahydropteroyltriglutamate--homocysteine methyltransferase (742 aa).

5-methyltetrahydropteroyltri-L-glutamate contacts are provided by residues 18–21 (REWK) and Lys112. L-homocysteine contacts are provided by residues 420–422 (IGS) and Glu473. Residues 420 to 422 (IGS) and Glu473 contribute to the L-methionine site. Residue Trp550 coordinates 5-methyltetrahydropteroyltri-L-glutamate. Asp588 is an L-homocysteine binding site. Position 588 (Asp588) interacts with L-methionine. Glu594 is a binding site for 5-methyltetrahydropteroyltri-L-glutamate. Positions 630, 632, and 654 each coordinate Zn(2+). The active-site Proton donor is His683. Cys715 serves as a coordination point for Zn(2+).

Belongs to the vitamin-B12 independent methionine synthase family. Zn(2+) is required as a cofactor.

The enzyme catalyses 5-methyltetrahydropteroyltri-L-glutamate + L-homocysteine = tetrahydropteroyltri-L-glutamate + L-methionine. Its pathway is amino-acid biosynthesis; L-methionine biosynthesis via de novo pathway; L-methionine from L-homocysteine (MetE route): step 1/1. Functionally, catalyzes the transfer of a methyl group from 5-methyltetrahydrofolate to homocysteine resulting in methionine formation. The chain is 5-methyltetrahydropteroyltriglutamate--homocysteine methyltransferase from Staphylococcus aureus (strain JH9).